Reading from the N-terminus, the 180-residue chain is Large ribosomal subunit protein uL6 (180 aa).

Belongs to the universal ribosomal protein uL6 family. As to quaternary structure, part of the 50S ribosomal subunit.

Functionally, this protein binds to the 23S rRNA, and is important in its secondary structure. It is located near the subunit interface in the base of the L7/L12 stalk, and near the tRNA binding site of the peptidyltransferase center. The chain is Large ribosomal subunit protein uL6 from Clostridium botulinum (strain Okra / Type B1).